The following is a 1061-amino-acid chain: RecBCD enzyme subunit RecC (1061 aa).

This sequence belongs to the RecC family. In terms of assembly, heterotrimer of RecB, RecC and RecD. All subunits contribute to DNA-binding.

Functionally, a helicase/nuclease that prepares dsDNA breaks (DSB) for recombinational DNA repair. Binds to DSBs and unwinds DNA via a highly rapid and processive ATP-dependent bidirectional helicase activity. Unwinds dsDNA until it encounters a Chi (crossover hotspot instigator) sequence from the 3' direction. Cuts ssDNA a few nucleotides 3' to the Chi site. The properties and activities of the enzyme are changed at Chi. The Chi-altered holoenzyme produces a long 3'-ssDNA overhang and facilitates RecA-binding to the ssDNA for homologous DNA recombination and repair. Holoenzyme degrades any linearized DNA that is unable to undergo homologous recombination. In the holoenzyme this subunit recognizes the wild-type Chi sequence, and when added to isolated RecB increases its ATP-dependent helicase processivity. In Buchnera aphidicola subsp. Schizaphis graminum (strain Sg), this protein is RecBCD enzyme subunit RecC.